Here is a 379-residue protein sequence, read N- to C-terminus: Cytochrome b (379 aa).

A run of 4 helical transmembrane segments spans residues 33-53, 77-98, 113-133, and 178-198; these read FGSL…FLAM, WLIR…FIHV, WNIG…GYVL, and FFAF…VHLL. Residues His83 and His97 each contribute to the heme b site. The heme b site is built by His182 and His196. His201 lines the a ubiquinone pocket. The next 4 membrane-spanning stretches (helical) occupy residues 226 to 246, 288 to 308, 320 to 340, and 347 to 367; these read IKDL…ALFF, LGGV…PLLN, ITQT…WIGG, and FTMI…ILXP.

This sequence belongs to the cytochrome b family. The cytochrome bc1 complex contains 11 subunits: 3 respiratory subunits (MT-CYB, CYC1 and UQCRFS1), 2 core proteins (UQCRC1 and UQCRC2) and 6 low-molecular weight proteins (UQCRH/QCR6, UQCRB/QCR7, UQCRQ/QCR8, UQCR10/QCR9, UQCR11/QCR10 and a cleavage product of UQCRFS1). This cytochrome bc1 complex then forms a dimer. The cofactor is heme b.

The protein resides in the mitochondrion inner membrane. Functionally, component of the ubiquinol-cytochrome c reductase complex (complex III or cytochrome b-c1 complex) that is part of the mitochondrial respiratory chain. The b-c1 complex mediates electron transfer from ubiquinol to cytochrome c. Contributes to the generation of a proton gradient across the mitochondrial membrane that is then used for ATP synthesis. The sequence is that of Cytochrome b (MT-CYB) from Akodon toba (Chaco grass mouse).